The following is a 322-amino-acid chain: Epoxide hydrolase A (322 aa).

One can recognise an AB hydrolase-1 domain in the interval 27–131; the sequence is PVVILAHGFP…AVAALSVPAL (105 aa). Aspartate 103 functions as the Nucleophile in the catalytic mechanism. Histidine 298 (proton acceptor) is an active-site residue.

Belongs to the AB hydrolase superfamily. Epoxide hydrolase family. Homodimer.

The catalysed reaction is an epoxide + H2O = an ethanediol. Functionally, could be involved in detoxification of extraneous host-cell epoxides. Catalyzes the hydrolysis of epoxide-containing substrates. This Mycobacterium tuberculosis (strain ATCC 25618 / H37Rv) protein is Epoxide hydrolase A (ephA).